The chain runs to 160 residues: MEVYAFIEVPKGSNVKYEYEDGKLKVDRILYGAMFYPYNYGFIPETLEEDGDPLDVLVITEEPLVPGSYIKVKPIGVLVTEDEKGVDRKIIAVPVKKVDPIYGEIEDISELKEGIKLKIKHFFERYKELEPGKFVKVKEFLGKEEAEKIIKQAQENYKKQ.

Positions 16, 28, and 40 each coordinate substrate. 3 residues coordinate Mg(2+): D50, D55, and D87. Y126 contacts substrate.

The protein belongs to the PPase family. In terms of assembly, homohexamer. Requires Mg(2+) as cofactor.

It localises to the cytoplasm. The enzyme catalyses diphosphate + H2O = 2 phosphate + H(+). Its function is as follows. Catalyzes the hydrolysis of inorganic pyrophosphate (PPi) forming two phosphate ions. This chain is Inorganic pyrophosphatase, found in Nanoarchaeum equitans (strain Kin4-M).